The chain runs to 119 residues: Ribonuclease P protein component (119 aa).

It belongs to the RnpA family. In terms of assembly, consists of a catalytic RNA component (M1 or rnpB) and a protein subunit.

It catalyses the reaction Endonucleolytic cleavage of RNA, removing 5'-extranucleotides from tRNA precursor.. Functionally, RNaseP catalyzes the removal of the 5'-leader sequence from pre-tRNA to produce the mature 5'-terminus. It can also cleave other RNA substrates such as 4.5S RNA. The protein component plays an auxiliary but essential role in vivo by binding to the 5'-leader sequence and broadening the substrate specificity of the ribozyme. The polypeptide is Ribonuclease P protein component (Borreliella burgdorferi (strain ZS7) (Borrelia burgdorferi)).